Reading from the N-terminus, the 456-residue chain is Adenylosuccinate synthetase (456 aa).

GTP-binding positions include Gly11–Gly17 and Gly39–Thr41. The active-site Proton acceptor is Asp12. Asp12 and Gly39 together coordinate Mg(2+). Residues Asp12–Lys15, Asn37–His40, Thr127, Arg141, Gln232, Thr247, and Arg328 contribute to the IMP site. The active-site Proton donor is His40. Thr324 to Arg330 is a binding site for substrate. GTP-binding positions include Arg330, His356–Asp358, and Gly441–Gly443.

Belongs to the adenylosuccinate synthetase family. In terms of assembly, homodimer. Requires Mg(2+) as cofactor.

The protein resides in the cytoplasm. It carries out the reaction IMP + L-aspartate + GTP = N(6)-(1,2-dicarboxyethyl)-AMP + GDP + phosphate + 2 H(+). It participates in purine metabolism; AMP biosynthesis via de novo pathway; AMP from IMP: step 1/2. In terms of biological role, plays an important role in the de novo pathway of purine nucleotide biosynthesis. Catalyzes the first committed step in the biosynthesis of AMP from IMP. The sequence is that of Adenylosuccinate synthetase from Natronomonas pharaonis (strain ATCC 35678 / DSM 2160 / CIP 103997 / JCM 8858 / NBRC 14720 / NCIMB 2260 / Gabara) (Halobacterium pharaonis).